Here is a 251-residue protein sequence, read N- to C-terminus: Orcokinin peptides type A (251 aa).

The first 20 residues, 1–20 (MTAQMFTIALLLSLSAIAAA), serve as a signal peptide directing secretion. Propeptides lie at residues 21-46 (GTIK…GAPV), 225-231 (DYDVFPD), and 249-251 (NVE).

The protein belongs to the orcokinin family.

It localises to the secreted. Myotropic peptides that enhance both the frequency and amplitude of spontaneous hindgut contractions. In Procambarus clarkii (Red swamp crayfish), this protein is Orcokinin peptides type A.